The following is a 226-amino-acid chain: Membrane protein (226 aa).

Over 1–11 the chain is Virion surface; that stretch reads MSNGSIPVDEV. A helical transmembrane segment spans residues 12-32; the sequence is IEHLRNWNFTWNIILTILLVV. The Intravirion portion of the chain corresponds to 33-41; it reads LQYGHYKYS. The helical transmembrane segment at 42–62 threads the bilayer; the sequence is VFLYGVKMAILWILWPLVLAL. Residues 63 to 75 are Virion surface-facing; the sequence is SLFDAWASFQVNW. A helical membrane pass occupies residues 76 to 96; sequence VFFAFSILMACITLMLWIMYF. Topologically, residues 97 to 226 are intravirion; sequence VNSIRLWRRT…TDSEKVPHLV (130 aa). The tract at residues 200-216 is interaction with N protein; sequence RSKHGDYSAVSNPSAVL.

The protein belongs to the alphacoronaviruses M protein family. Homomultimer. Interacts with envelope E protein in the budding compartment of the host cell, which is located between endoplasmic reticulum and the Golgi complex. Forms a complex with HE and S proteins. Interacts with nucleocapsid N protein. This interaction probably participates in RNA packaging into the virus.

It localises to the virion membrane. It is found in the host Golgi apparatus membrane. Its function is as follows. Component of the viral envelope that plays a central role in virus morphogenesis and assembly via its interactions with other viral proteins. The sequence is that of Membrane protein from Sus scrofa (Pig).